The following is a 64-amino-acid chain: Alpha-conotoxin CnIL (64 aa).

The signal sequence occupies residues 1–21; it reads MGMRMMFTVFLLVVLTTTVVS. The propeptide occupies 22–49; the sequence is FPSDSASDGRDDEAKDERSDIYESKRDG. Intrachain disulfides connect C51-C56 and C52-C62. C62 carries the cysteine amide modification.

The protein belongs to the conotoxin A superfamily. As to expression, expressed by the venom duct.

The protein localises to the secreted. The polypeptide is Alpha-conotoxin CnIL (Conus consors (Singed cone)).